A 322-amino-acid chain; its full sequence is uncharacterized protein (322 aa).

The next 8 membrane-spanning stretches (helical) occupy residues 7–27 (IQKI…IGAI), 54–74 (AFAL…LAMF), 87–107 (FVGF…LSGS), 128–148 (IAFC…ITFV), 162–182 (FLSV…YLLI), 209–229 (IGLT…LLPG), 249–269 (GIIS…LFLL), and 287–307 (VIYY…FELL).

This sequence to E.coli YbhN.

It is found in the cell membrane. This is an uncharacterized protein from Synechocystis sp. (strain ATCC 27184 / PCC 6803 / Kazusa).